We begin with the raw amino-acid sequence, 304 residues long: Non-specific ribonucleoside hydrolase RihC (304 aa).

The active site involves His233.

This sequence belongs to the IUNH family. RihC subfamily.

Its function is as follows. Hydrolyzes both purine and pyrimidine ribonucleosides with a broad-substrate specificity. The polypeptide is Non-specific ribonucleoside hydrolase RihC (Shigella sonnei (strain Ss046)).